The chain runs to 443 residues: Exodeoxyribonuclease 7 large subunit (443 aa).

It belongs to the XseA family. In terms of assembly, heterooligomer composed of large and small subunits.

Its subcellular location is the cytoplasm. It catalyses the reaction Exonucleolytic cleavage in either 5'- to 3'- or 3'- to 5'-direction to yield nucleoside 5'-phosphates.. Functionally, bidirectionally degrades single-stranded DNA into large acid-insoluble oligonucleotides, which are then degraded further into small acid-soluble oligonucleotides. The protein is Exodeoxyribonuclease 7 large subunit of Vibrio vulnificus (strain CMCP6).